A 203-amino-acid chain; its full sequence is Imidazoleglycerol-phosphate dehydratase (203 aa).

The segment at 184–203 (DPRRSSQIPSSKGVLEQAGQ) is disordered.

This sequence belongs to the imidazoleglycerol-phosphate dehydratase family.

It localises to the cytoplasm. The catalysed reaction is D-erythro-1-(imidazol-4-yl)glycerol 3-phosphate = 3-(imidazol-4-yl)-2-oxopropyl phosphate + H2O. It participates in amino-acid biosynthesis; L-histidine biosynthesis; L-histidine from 5-phospho-alpha-D-ribose 1-diphosphate: step 6/9. This Prochlorococcus marinus (strain NATL1A) protein is Imidazoleglycerol-phosphate dehydratase.